The chain runs to 141 residues: Large ribosomal subunit protein uL11 (141 aa).

The protein belongs to the universal ribosomal protein uL11 family. Part of the ribosomal stalk of the 50S ribosomal subunit. Interacts with L10 and the large rRNA to form the base of the stalk. L10 forms an elongated spine to which L12 dimers bind in a sequential fashion forming a multimeric L10(L12)X complex. One or more lysine residues are methylated.

Its function is as follows. Forms part of the ribosomal stalk which helps the ribosome interact with GTP-bound translation factors. This is Large ribosomal subunit protein uL11 from Listeria innocua serovar 6a (strain ATCC BAA-680 / CLIP 11262).